Consider the following 298-residue polypeptide: Tyrosine recombinase XerD (298 aa).

The 86-residue stretch at 2 to 87 (KQDLARIEQF…AVRRLFQYLY (86 aa)) folds into the Core-binding (CB) domain. One can recognise a Tyr recombinase domain in the interval 108-292 (RLPKDLSEAQ…ATERLRQLHQ (185 aa)). Residues arginine 148, lysine 172, histidine 244, arginine 247, and histidine 270 contribute to the active site. Tyrosine 279 (O-(3'-phospho-DNA)-tyrosine intermediate) is an active-site residue.

The protein belongs to the 'phage' integrase family. XerD subfamily. In terms of assembly, forms a cyclic heterotetrameric complex composed of two molecules of XerC and two molecules of XerD, in which XerC interacts with XerD via its C-terminal region, XerD interacts with XerC via its C-terminal region and so on.

The protein resides in the cytoplasm. FtsK may regulate the catalytic switch between XerC and XerD in the heterotetrameric complex during the two steps of the recombination process. Its function is as follows. Site-specific tyrosine recombinase, which acts by catalyzing the cutting and rejoining of the recombining DNA molecules. Binds cooperatively to specific DNA consensus sequences that are separated from XerC binding sites by a short central region, forming the heterotetrameric XerC-XerD complex that recombines DNA substrates. The complex is essential to convert dimers of the bacterial chromosome into monomers to permit their segregation at cell division. It also contributes to the segregational stability of plasmids. In the complex XerD specifically exchanges the bottom DNA strands. This chain is Tyrosine recombinase XerD, found in Escherichia coli O157:H7.